The following is a 536-amino-acid chain: E3 ubiquitin-protein ligase Godzilla (536 aa).

Residues 1-21 form the signal peptide; sequence MSKRSCQILTLLGLCLVCHEA. Topologically, residues 22–174 are extracellular; that stretch reads TLVGGHVLVY…DELPFNINTQ (153 aa). Positions 89–151 constitute a PA domain; that stretch reads FVALVARGEC…FVGHTTGKAL (63 aa). Asn109 and Asn132 each carry an N-linked (GlcNAc...) asparagine glycan. Residues 175 to 195 form a helical membrane-spanning segment; that stretch reads LILPFSILIGMCFIIMVIYMI. Residues 196–536 lie on the Cytoplasmic side of the membrane; sequence YKCIREQRRL…HSASDRQFLI (341 aa). An RING-type; atypical zinc finger spans residues 235–277; the sequence is CVICLEDFIEDDKLRVLPCSHPYHTHCIDPWLTENRRVCPICK. Disordered regions lie at residues 287 to 334 and 350 to 372; these read RASR…GAAG and HGTF…SDDE. The segment covering 307-334 has biased composition (low complexity); sequence TPLLQQQQSNGRQVGQVSSASSAGGAAG.

It belongs to the Godzilla family.

It localises to the endosome membrane. The enzyme catalyses S-ubiquitinyl-[E2 ubiquitin-conjugating enzyme]-L-cysteine + [acceptor protein]-L-lysine = [E2 ubiquitin-conjugating enzyme]-L-cysteine + N(6)-ubiquitinyl-[acceptor protein]-L-lysine.. Its pathway is protein modification; protein ubiquitination. Endosomal E3 ubiquitin-protein ligase that regulates the recycling endosome pathway by mediating ubiquitination of Synaptobrevin (Syb). Also acts as a regulator of transcytosis in wing imaginal disks by catalyzing ubiquitination of Syb: ubiquitination of Syb promotes transcytosis of wingless (wg) to the basolateral surface. In Drosophila melanogaster (Fruit fly), this protein is E3 ubiquitin-protein ligase Godzilla.